Here is a 424-residue protein sequence, read N- to C-terminus: Translation initiation factor 2 subunit gamma (424 aa).

Positions 23-220 (LPEVNIGLVG…AIEETIPTPE (198 aa)) constitute a tr-type G domain. A G1 region spans residues 32-39 (GHVDHGKT). Mg(2+)-binding residues include Asp-35, Thr-39, Gly-60, and Ser-62. 35 to 40 (DHGKTT) contributes to the GTP binding site. The tract at residues 60–64 (GISIK) is G2. Positions 107 to 110 (DSPG) are G3. Residues 163 to 166 (NKID) and 198 to 200 (SAQ) each bind GTP. A G4 region spans residues 163–166 (NKID). The G5 stretch occupies residues 198-200 (SAQ).

It belongs to the TRAFAC class translation factor GTPase superfamily. Classic translation factor GTPase family. EIF2G subfamily. In terms of assembly, heterotrimer composed of an alpha, a beta and a gamma chain. Requires Mg(2+) as cofactor.

The enzyme catalyses GTP + H2O = GDP + phosphate + H(+). In terms of biological role, eIF-2 functions in the early steps of protein synthesis by forming a ternary complex with GTP and initiator tRNA. The protein is Translation initiation factor 2 subunit gamma of Archaeoglobus fulgidus (strain ATCC 49558 / DSM 4304 / JCM 9628 / NBRC 100126 / VC-16).